The chain runs to 131 residues: Translation initiation factor 5A (131 aa).

Hypusine is present on Lys37.

This sequence belongs to the eIF-5A family.

Its subcellular location is the cytoplasm. Its function is as follows. Functions by promoting the formation of the first peptide bond. The protein is Translation initiation factor 5A (eIF5A) of Methanococcus aeolicus (strain ATCC BAA-1280 / DSM 17508 / OCM 812 / Nankai-3).